Reading from the N-terminus, the 158-residue chain is MSDLTHLDESGRARMVDVGAKDDTLREAVARGEVRMRPETLQRLAAGDMPKGDVLATARIAGIMAAKRAPDLIPLCHPLLLTHVAVDARLDVATSTVQIEATVRTVGKTGVEMEALTAVSVAALTIYDMCKAIDREMQIGAIRLVRKSGGRSGDFVND.

Residues 75–77 (LCH) and 113–114 (ME) each bind substrate. Aspartate 128 is a catalytic residue.

It belongs to the MoaC family. Homohexamer; trimer of dimers.

It catalyses the reaction (8S)-3',8-cyclo-7,8-dihydroguanosine 5'-triphosphate = cyclic pyranopterin phosphate + diphosphate. It functions in the pathway cofactor biosynthesis; molybdopterin biosynthesis. Functionally, catalyzes the conversion of (8S)-3',8-cyclo-7,8-dihydroguanosine 5'-triphosphate to cyclic pyranopterin monophosphate (cPMP). The sequence is that of Cyclic pyranopterin monophosphate synthase from Roseiflexus sp. (strain RS-1).